Reading from the N-terminus, the 371-residue chain is Cytochrome b (371 aa).

4 helical membrane-spanning segments follow: residues 25–45 (FGSMLLACSSMQVLTGFFLAV), 69–90 (WMMQNLHAIGASMFFICIYTHI), 105–125 (WLSGTTLLIMLMATAFFGYVL), and 170–190 (FFALHFILPFGIISLSSLHIM). 2 residues coordinate heme b: H75 and H89. The heme b site is built by H174 and H188. Position 193 (H193) interacts with a ubiquinone. Helical transmembrane passes span 218 to 238 (YKDMLMLSLMILALLMTVAFF), 280 to 300 (LGGALALVMSIMILLTAPFTH), 312 to 332 (IMQLMFWTLVATFAVITWAAT), and 339 to 358 (FTTISQVASTMYFMFFITNP).

This sequence belongs to the cytochrome b family. As to quaternary structure, the cytochrome bc1 complex contains 3 respiratory subunits (MT-CYB, CYC1 and UQCRFS1), 2 core proteins (UQCRC1 and UQCRC2) and probably 6 low-molecular weight proteins. Heme b serves as cofactor.

The protein localises to the mitochondrion inner membrane. In terms of biological role, component of the ubiquinol-cytochrome c reductase complex (complex III or cytochrome b-c1 complex) that is part of the mitochondrial respiratory chain. The b-c1 complex mediates electron transfer from ubiquinol to cytochrome c. Contributes to the generation of a proton gradient across the mitochondrial membrane that is then used for ATP synthesis. This chain is Cytochrome b (MT-CYB), found in Eryx colubrinus colubrinus.